Here is a 437-residue protein sequence, read N- to C-terminus: F-box/FBD/LRR-repeat protein At5g22700 (437 aa).

One can recognise an F-box domain in the interval 5-51 (GDRISSLPDELLCQILSNLPTKNAVTTSILSTRWRSIWLSTPVLDID). 7 LRR repeats span residues 86-113 (RDDV…EVDC), 134-160 (SLRL…HLEE), 161-186 (NIYY…TVVR), 187-210 (IVDI…KLVL), 215-240 (GWFI…SLKD), 272-297 (PVTF…TISG), and 322-350 (NARF…VLGL). Residues 361–406 (RVSSVPPCFLSSLEFVEIRSRLCRKRYVMKVARYFAKNSVMLKKFV) enclose the FBD domain.

The protein is F-box/FBD/LRR-repeat protein At5g22700 of Arabidopsis thaliana (Mouse-ear cress).